A 440-amino-acid chain; its full sequence is MDRFFCTVWVWSVLFGACTSQTRSSFSLNADGLNSSGVAHASEHVSHAAAMGNEAGAADASVSESPASFSPGRGSAWVQGTVGHIPAEHHAALQAFFDTEEGMRITDALCTGDTYAAFNELEALYDPSSETDTARSRALHAYVRALLQGIRLAPRVAPPTHVGVSATLQYRDSVWPLQRGRFTLCYQIGPEHGDVMQVTLCADTQGVLFFPFPSAALSQEVTLSFDTAALVHAPSLCAQDSALQERPSSPEPVVSTIPSPEGEENSAAGEPALANLVCRVAAPSSDPKQHPVRRQVSTTICILDYGKTGRPLTHENLTATRLLGGLLKRRFVNIGLDSLYGVGKVPDHAVIARARKKFGGNVRRLVFGLTQVRRLERDSDARWKCVLFAQLHVWDFPKGAYTHHFTAQCTETGDTESQSYVRARTRMGETVLSDVLQCFL.

The N-terminal stretch at 1-17 (MDRFFCTVWVWSVLFGA) is a signal peptide. Residue Cys18 is the site of N-palmitoyl cysteine attachment. A lipid anchor (S-diacylglycerol cysteine) is attached at Cys18. The segment at 241–268 (SALQERPSSPEPVVSTIPSPEGEENSAA) is disordered.

It localises to the cell membrane. This is an uncharacterized protein from Treponema pallidum (strain Nichols).